The primary structure comprises 328 residues: DhaKLM operon coactivator DhaQ (328 aa).

Positions 6–328 (STNEIPEEML…LNVPTGAFAW (323 aa)) constitute a DhaK domain. His-215 is subject to Tele-(1,2,3-trihydroxypropan-2-yl)histidine.

Homodimer. Interacts with a homodimer of DhaS.

Functionally, coactivator for the transcription factor DhaS. The heterotetramer formed by DhaQ and DhaS functions as a transcriptional regulator. Activated by covalent binding of dihydroxyacetone to DhaQ. The complex activates the dhaKLM operon. In Lactococcus lactis subsp. lactis (strain IL1403) (Streptococcus lactis), this protein is DhaKLM operon coactivator DhaQ (dhaQ).